The following is a 316-amino-acid chain: Glutathione synthetase (316 aa).

The region spanning 124-310 (EKLFTAWFPE…ITGKLMDAIE (187 aa)) is the ATP-grasp domain. Residue 150-207 (FREEHGDVILKPLDGMGGASIFRVKENDPNVSVIIETLTNHGQNYAMAQTFVPDISNG) participates in ATP binding. The Mg(2+) site is built by Glu281 and Asn283.

This sequence belongs to the prokaryotic GSH synthase family. It depends on Mg(2+) as a cofactor. Requires Mn(2+) as cofactor.

The catalysed reaction is gamma-L-glutamyl-L-cysteine + glycine + ATP = glutathione + ADP + phosphate + H(+). Its pathway is sulfur metabolism; glutathione biosynthesis; glutathione from L-cysteine and L-glutamate: step 2/2. The protein is Glutathione synthetase of Vibrio parahaemolyticus serotype O3:K6 (strain RIMD 2210633).